The sequence spans 214 residues: Large ribosomal subunit protein uL16 (214 aa).

Residue Arg32 is modified to Citrulline. Lys175 is covalently cross-linked (Glycyl lysine isopeptide (Lys-Gly) (interchain with G-Cter in SUMO2)). Lys188 participates in a covalent cross-link: Glycyl lysine isopeptide (Lys-Gly) (interchain with G-Cter in ubiquitin).

This sequence belongs to the universal ribosomal protein uL16 family. As to quaternary structure, component of the large ribosomal subunit. Mature ribosomes consist of a small (40S) and a large (60S) subunit. The 40S subunit contains about 33 different proteins and 1 molecule of RNA (18S). The 60S subunit contains about 49 different proteins and 3 molecules of RNA (28S, 5.8S and 5S). Citrullinated by PADI4. In terms of processing, ufmylated by UFL1.

Its subcellular location is the cytoplasm. In terms of biological role, component of the large ribosomal subunit. Plays a role in the formation of actively translating ribosomes. May play a role in the embryonic brain development. The chain is Large ribosomal subunit protein uL16 from Pongo abelii (Sumatran orangutan).